We begin with the raw amino-acid sequence, 947 residues long: Bifunctional glutamine synthetase adenylyltransferase/adenylyl-removing enzyme (947 aa).

Positions 1-440 (MTPLSSPLSQ…VFNELIGDDE (440 aa)) are adenylyl removase. An adenylyl transferase region spans residues 450 to 947 (SEPWREVWQD…ASWRKWLVAV (498 aa)).

Belongs to the GlnE family. The cofactor is Mg(2+).

It carries out the reaction [glutamine synthetase]-O(4)-(5'-adenylyl)-L-tyrosine + phosphate = [glutamine synthetase]-L-tyrosine + ADP. It catalyses the reaction [glutamine synthetase]-L-tyrosine + ATP = [glutamine synthetase]-O(4)-(5'-adenylyl)-L-tyrosine + diphosphate. In terms of biological role, involved in the regulation of glutamine synthetase GlnA, a key enzyme in the process to assimilate ammonia. When cellular nitrogen levels are high, the C-terminal adenylyl transferase (AT) inactivates GlnA by covalent transfer of an adenylyl group from ATP to specific tyrosine residue of GlnA, thus reducing its activity. Conversely, when nitrogen levels are low, the N-terminal adenylyl removase (AR) activates GlnA by removing the adenylyl group by phosphorolysis, increasing its activity. The regulatory region of GlnE binds the signal transduction protein PII (GlnB) which indicates the nitrogen status of the cell. The sequence is that of Bifunctional glutamine synthetase adenylyltransferase/adenylyl-removing enzyme from Salmonella paratyphi A (strain ATCC 9150 / SARB42).